The chain runs to 165 residues: Protein SprT (165 aa).

One can recognise a SprT-like domain in the interval 10-158; sequence EACYRQAEHF…CRRCKATLVF (149 aa). Histidine 69 is a Zn(2+) binding site. Residue glutamate 70 is part of the active site. Position 73 (histidine 73) interacts with Zn(2+).

This sequence belongs to the SprT family. Requires Zn(2+) as cofactor.

It is found in the cytoplasm. This is Protein SprT from Pseudomonas aeruginosa (strain UCBPP-PA14).